The primary structure comprises 273 residues: 2,3,4,5-tetrahydropyridine-2,6-dicarboxylate N-succinyltransferase (273 aa).

Substrate is bound by residues arginine 104 and aspartate 141.

It belongs to the transferase hexapeptide repeat family. In terms of assembly, homotrimer.

Its subcellular location is the cytoplasm. The enzyme catalyses (S)-2,3,4,5-tetrahydrodipicolinate + succinyl-CoA + H2O = (S)-2-succinylamino-6-oxoheptanedioate + CoA. Its pathway is amino-acid biosynthesis; L-lysine biosynthesis via DAP pathway; LL-2,6-diaminopimelate from (S)-tetrahydrodipicolinate (succinylase route): step 1/3. The protein is 2,3,4,5-tetrahydropyridine-2,6-dicarboxylate N-succinyltransferase of Azoarcus sp. (strain BH72).